A 563-amino-acid chain; its full sequence is UvrABC system protein C (563 aa).

Residues 12–87 (NKSGVYIFKK…IYKYKPKYNA (76 aa)) enclose the GIY-YIG domain. The 36-residue stretch at 194–229 (SNVISFIKLKMEQHARLLDFENAAKYRDILLNFNKV) folds into the UVR domain.

The protein belongs to the UvrC family. In terms of assembly, interacts with UvrB in an incision complex.

It is found in the cytoplasm. In terms of biological role, the UvrABC repair system catalyzes the recognition and processing of DNA lesions. UvrC both incises the 5' and 3' sides of the lesion. The N-terminal half is responsible for the 3' incision and the C-terminal half is responsible for the 5' incision. The chain is UvrABC system protein C from Fervidobacterium nodosum (strain ATCC 35602 / DSM 5306 / Rt17-B1).